A 138-amino-acid chain; its full sequence is uncharacterized protein (138 aa).

This is an uncharacterized protein from Thiocystis violacea.